We begin with the raw amino-acid sequence, 199 residues long: 5'-deoxynucleotidase HDDC2 (199 aa).

Ala-2 is modified (N-acetylalanine). Ser-5 carries the phosphoserine modification. The 103-residue stretch at 41 to 143 folds into the HD domain; it reads VSDHMYRMAV…VKQLDQCEMI (103 aa). 7 residues coordinate a divalent metal cation: His-44, His-72, Asp-73, Glu-76, Asp-81, Ile-82, and Asp-138. Ser-199 is subject to Phosphoserine.

The protein belongs to the HDDC2 family. As to quaternary structure, homodimer. Mn(2+) serves as cofactor. Requires Co(2+) as cofactor. It depends on Mg(2+) as a cofactor.

The enzyme catalyses a 2'-deoxyribonucleoside 5'-phosphate + H2O = a 2'-deoxyribonucleoside + phosphate. Its function is as follows. Catalyzes the dephosphorylation of the nucleoside 5'-monophosphates deoxyadenosine monophosphate (dAMP), deoxycytidine monophosphate (dCMP), deoxyguanosine monophosphate (dGMP) and deoxythymidine monophosphate (dTMP). In Mus musculus (Mouse), this protein is 5'-deoxynucleotidase HDDC2 (Hddc2).